The following is a 662-amino-acid chain: Acetyl-coenzyme A synthetase (662 aa).

CoA is bound by residues 197–200 (RKGK) and Thr317. ATP is bound by residues 393–395 (GEP), 417–422 (DTWWQT), Asp510, and Arg525. Ser533 contributes to the CoA binding site. Arg536 lines the ATP pocket. Mg(2+)-binding residues include His549 and Val552. An N6-acetyllysine modification is found at Lys623.

The protein belongs to the ATP-dependent AMP-binding enzyme family. Requires Mg(2+) as cofactor. Acetylated. Deacetylation by the SIR2-homolog deacetylase activates the enzyme.

The enzyme catalyses acetate + ATP + CoA = acetyl-CoA + AMP + diphosphate. Functionally, catalyzes the conversion of acetate into acetyl-CoA (AcCoA), an essential intermediate at the junction of anabolic and catabolic pathways. AcsA undergoes a two-step reaction. In the first half reaction, AcsA combines acetate with ATP to form acetyl-adenylate (AcAMP) intermediate. In the second half reaction, it can then transfer the acetyl group from AcAMP to the sulfhydryl group of CoA, forming the product AcCoA. In Helicobacter acinonychis (strain Sheeba), this protein is Acetyl-coenzyme A synthetase.